The primary structure comprises 198 residues: MNVVVVDNYDSFTYNLVEYLSAQPRDDHAPDVTVLKNTASLAAVRAADPDAVVISPGPGHPDTPRDVGVTTDVLRAVSPRVPTLGVCLGMEAAVHEYGGTVGRAAEPMHGKTTPVSHDETGIFADIQQDFPAARYHSLVCTSIPSCFAVTATTRDGSLPMAIRHRDHPLACVQFHPESVLTGVGHDVIGNFLDAAAAH.

The region spanning 2 to 198 (NVVVVDNYDS…GNFLDAAAAH (197 aa)) is the Glutamine amidotransferase type-1 domain. L-glutamine is bound at residue 57-59 (GPG). Residue Cys-87 is the Nucleophile; for GATase activity of the active site. 137–138 (SL) lines the L-glutamine pocket. Catalysis depends on for GATase activity residues His-175 and Glu-177.

Heterotetramer consisting of two non-identical subunits: a beta subunit (TrpG) and a large alpha subunit (TrpE).

It carries out the reaction chorismate + L-glutamine = anthranilate + pyruvate + L-glutamate + H(+). It participates in amino-acid biosynthesis; L-tryptophan biosynthesis; L-tryptophan from chorismate: step 1/5. Part of a heterotetrameric complex that catalyzes the two-step biosynthesis of anthranilate, an intermediate in the biosynthesis of L-tryptophan. In the first step, the glutamine-binding beta subunit (TrpG) of anthranilate synthase (AS) provides the glutamine amidotransferase activity which generates ammonia as a substrate that, along with chorismate, is used in the second step, catalyzed by the large alpha subunit of AS (TrpE) to produce anthranilate. In the absence of TrpG, TrpE can synthesize anthranilate directly from chorismate and high concentrations of ammonia. In Halobacterium salinarum (strain ATCC 700922 / JCM 11081 / NRC-1) (Halobacterium halobium), this protein is Anthranilate synthase component 2 (trpG).